A 309-amino-acid chain; its full sequence is MPKVRTKDIIEQFQLELVSGAEGIYRPITTSDLSRPGIEMAGYFAYYPAERLQLLGRTELSFYETLTPEEKRARMQRLCTDITPGIIVSRGLDVPPELIEASERQSVPVMRSTMKTTRLSSRLTNYLESKLAPTTAVHGVLVDVYGVGVLITGKSGVGKSETALELVKRGHRLVADDCVEIRQEDEDTLIGSAPELIEHLLEIRGLGIINMMTLFGAGAVLPHKRISLVIDLELWDPEKQYDRLGLEEEKMKILDIELPRLTIPVRPGRNLAVIVEVAAMNFRLKRMGVNAAEEFSARLSDAIEEGERD.

Catalysis depends on residues histidine 138 and lysine 159. ATP is bound at residue 153–160 (GKSGVGKS). Residue serine 160 participates in Mg(2+) binding. The active-site Proton acceptor; for phosphorylation activity. Proton donor; for dephosphorylation activity is the aspartate 177. The important for the catalytic mechanism of both phosphorylation and dephosphorylation stretch occupies residues 201-210 (LEIRGLGIIN). Glutamate 202 contributes to the Mg(2+) binding site. The active site involves arginine 243. Residues 264-269 (PVRPGR) form an important for the catalytic mechanism of dephosphorylation region.

The protein belongs to the HPrK/P family. As to quaternary structure, homohexamer. It depends on Mg(2+) as a cofactor.

It carries out the reaction [HPr protein]-L-serine + ATP = [HPr protein]-O-phospho-L-serine + ADP + H(+). The catalysed reaction is [HPr protein]-O-phospho-L-serine + phosphate + H(+) = [HPr protein]-L-serine + diphosphate. Its function is as follows. Catalyzes the ATP- as well as the pyrophosphate-dependent phosphorylation of a specific serine residue in HPr, a phosphocarrier protein of the phosphoenolpyruvate-dependent sugar phosphotransferase system (PTS). HprK/P also catalyzes the pyrophosphate-producing, inorganic phosphate-dependent dephosphorylation (phosphorolysis) of seryl-phosphorylated HPr (P-Ser-HPr). The two antagonistic activities of HprK/P are regulated by several intracellular metabolites, which change their concentration in response to the absence or presence of rapidly metabolisable carbon sources (glucose, fructose, etc.) in the growth medium. Also phosphorylates/dephosphorylates the HPr-like catabolite repression protein crh on a specific serine residue. Therefore, by controlling the phosphorylation state of HPr and crh, HPrK/P is a sensor enzyme that plays a major role in the regulation of carbon metabolism and sugar transport: it mediates carbon catabolite repression (CCR), and regulates PTS-catalyzed carbohydrate uptake and inducer exclusion. The polypeptide is HPr kinase/phosphorylase (Geobacillus thermodenitrificans (strain NG80-2)).